Reading from the N-terminus, the 548-residue chain is Probable manganese-dependent inorganic pyrophosphatase (548 aa).

The tract at residues 1-74 is PPase part 1; that stretch reads MKALERVYVI…HIETLEPTVE (74 aa). Positions 12, 16, and 18 each coordinate Mn(2+). CBS domains lie at 77-132 and 254-311; these read ELKN…RLKI and MSKK…VILV. The PPase part 2 stretch occupies residues 306-548; it reads KKVILVDHNE…KIGEVLRRER (243 aa). 3 residues coordinate Mn(2+): D312, H334, and D386.

Belongs to the PPase class C family. Requires Mn(2+) as cofactor.

The protein localises to the cytoplasm. The enzyme catalyses diphosphate + H2O = 2 phosphate + H(+). This chain is Probable manganese-dependent inorganic pyrophosphatase (ppaC), found in Thermotoga maritima (strain ATCC 43589 / DSM 3109 / JCM 10099 / NBRC 100826 / MSB8).